We begin with the raw amino-acid sequence, 159 residues long: Transcription elongation factor GreA (159 aa).

The stretch at 47-73 (AEYDAAREEQSLTEAHIADLENKLSTA) forms a coiled coil.

Belongs to the GreA/GreB family.

Necessary for efficient RNA polymerase transcription elongation past template-encoded arresting sites. The arresting sites in DNA have the property of trapping a certain fraction of elongating RNA polymerases that pass through, resulting in locked ternary complexes. Cleavage of the nascent transcript by cleavage factors such as GreA or GreB allows the resumption of elongation from the new 3'terminus. GreA releases sequences of 2 to 3 nucleotides. This Chlorobium phaeobacteroides (strain DSM 266 / SMG 266 / 2430) protein is Transcription elongation factor GreA.